Reading from the N-terminus, the 217-residue chain is Protein matrimony (217 aa).

The POLO box domain (PBD)-binding signature appears at 39 to 41 (STP). Residues Ser63 and Ser66 each carry the phosphoserine modification. A disordered region spans residues 83-106 (KQQQQQQHQHCHRTQLKPPPFVLP). The region spanning 157 to 217 (NHAANVEQIL…NRIMDVLHTL (61 aa)) is the SAM domain.

Interacts with polo. Interacts with cort. In terms of processing, probably ubiquitinated: degraded during the oocyte-to-embryo transition by the anaphase promoting complex/cyclosome (APC/C) containing cort protein.

Its subcellular location is the nucleus. It localises to the chromosome. In terms of biological role, polo kinase inhibitor required to maintain G2 arrest in the meiotic cell cycle in females. Holds heterochromatically paired homologs together from the end of pachytene until metaphase I. Haploinsufficient locus for homologous achiasmate segregation and may be required for the maintenance of heterochromatic pairings. In Drosophila melanogaster (Fruit fly), this protein is Protein matrimony.